A 32-amino-acid chain; its full sequence is Chaperone protein DnaK (32 aa).

This sequence belongs to the heat shock protein 70 family.

In terms of biological role, acts as a chaperone. The polypeptide is Chaperone protein DnaK (Anabaena sp. (strain L31)).